The chain runs to 144 residues: Transcriptional regulator SlyA (144 aa).

The region spanning 2-135 (ESPLGSDLAR…LSNMIAKLEK (134 aa)) is the HTH marR-type domain. A DNA-binding region (H-T-H motif) is located at residues 49–72 (QIQLAKAIGIEQPSLVRTLDQLEE).

Belongs to the SlyA family. In terms of assembly, homodimer.

In terms of biological role, transcription regulator that can specifically activate or repress expression of target genes. This Sodalis glossinidius (strain morsitans) protein is Transcriptional regulator SlyA.